Here is a 361-residue protein sequence, read N- to C-terminus: Transcription factor Sox-18B (361 aa).

A disordered region spans residues 17-65 (VNSTWVPPADTVPEASLTPHSPPAPDSPAPSPKPGYGYSACEEKPGDPR). Over residues 36-49 (HSPPAPDSPAPSPK) the composition is skewed to pro residues. A DNA-binding region (HMG box) is located at residues 66–134 (IRRPMNAFMV…QHLQDHPNYK (69 aa)). Interaction with DNA regions lie at residues 68–81 (RPMN…KDER) and 92–104 (HNAV…GQSW). The interval 127 to 163 (LQDHPNYKYRPRRKKQAKKLKRMDPSHHLRNEGYTGG) is disordered. A compositionally biased stretch (basic residues) spans 133–147 (YKYRPRRKKQAKKLK). Residues 147-208 (KRMDPSHHLR…VLEPSEPAFF (62 aa)) form an important for transcriptional activation region. Positions 148–157 (RMDPSHHLRN) are enriched in basic and acidic residues. The Sox C-terminal domain occupies 234-360 (KTLREISLPY…TAMYYTPCIT (127 aa)). The 9aaTAD motif lies at 306–314 (NEFDQYLNM).

In terms of tissue distribution, expressed in the adult spleen, lung, heart and kidney, and at a lower level in the adult testis, liver and brain.

Its subcellular location is the nucleus. Transcription factor. Binds to the consensus DNA sequence 5'-AACAAT-3'. Also binds 5'-CACAAT-3' and 5'-AATAAT-3' but with a lower affinity. Acts partially redundantly with sox7 during cardiogenesis, acting indirectly through nodal-signaling to induce mesodermal, organizer and endodermal tissues, which then interact to initiate cardiogenesis. Also acts as an antagonist of beta-catenin signaling. This is Transcription factor Sox-18B (sox18-b) from Xenopus laevis (African clawed frog).